A 236-amino-acid chain; its full sequence is uncharacterized protein (236 aa).

In terms of domain architecture, HTH gntR-type spans methionine 1–histidine 69. Positions leucine 29–glutamate 48 form a DNA-binding region, H-T-H motif.

This is an uncharacterized protein from Bacillus subtilis (strain 168).